Consider the following 264-residue polypeptide: Thiazole synthase (264 aa).

The active-site Schiff-base intermediate with DXP is the Lys106. Residues Gly167, 193–194 (AG), and 215–216 (NT) contribute to the 1-deoxy-D-xylulose 5-phosphate site.

This sequence belongs to the ThiG family. In terms of assembly, homotetramer. Forms heterodimers with either ThiH or ThiS.

It localises to the cytoplasm. It catalyses the reaction [ThiS sulfur-carrier protein]-C-terminal-Gly-aminoethanethioate + 2-iminoacetate + 1-deoxy-D-xylulose 5-phosphate = [ThiS sulfur-carrier protein]-C-terminal Gly-Gly + 2-[(2R,5Z)-2-carboxy-4-methylthiazol-5(2H)-ylidene]ethyl phosphate + 2 H2O + H(+). Its pathway is cofactor biosynthesis; thiamine diphosphate biosynthesis. Functionally, catalyzes the rearrangement of 1-deoxy-D-xylulose 5-phosphate (DXP) to produce the thiazole phosphate moiety of thiamine. Sulfur is provided by the thiocarboxylate moiety of the carrier protein ThiS. In vitro, sulfur can be provided by H(2)S. This is Thiazole synthase from Xanthomonas euvesicatoria pv. vesicatoria (strain 85-10) (Xanthomonas campestris pv. vesicatoria).